We begin with the raw amino-acid sequence, 452 residues long: Isocitrate dehydrogenase [NADP], mitochondrial (452 aa).

The transit peptide at 1–39 (MAGYLRAVSSLCRASGSARTWAPAALTVPSWPEQPRRHY) directs the protein to the mitochondrion. 4 positions are modified to N6-acetyllysine: K45, K48, K67, and K69. N6-acetyllysine; alternate is present on residues K80 and K106. An N6-succinyllysine; alternate mark is found at K80 and K106. NADP(+) is bound by residues 115-117 (TIT) and R122. T117 is a binding site for D-threo-isocitrate. Residues 134 to 140 (SPNGTIR) and R149 each bind D-threo-isocitrate. An N6-acetyllysine modification is found at K155. K166 is subject to N6-acetyllysine; alternate. An N6-succinyllysine; alternate modification is found at K166. R172 lines the D-threo-isocitrate pocket. Residues K180 and K193 each carry the N6-acetyllysine; alternate modification. N6-succinyllysine; alternate occurs at positions 180 and 193. An N6-acetyllysine modification is found at K199. K256 bears the N6-acetyllysine; alternate mark. K256 is subject to N6-succinyllysine; alternate. N6-acetyllysine is present on residues K263, K272, K275, and K280. An N6-acetyllysine; alternate modification is found at K282. K282 is subject to N6-succinyllysine; alternate. D291 is a Mn(2+) binding site. K299 contacts NADP(+). A Mn(2+)-binding site is contributed by D314. Residues 349 to 354 (GTVTRH) and N367 each bind NADP(+). Residue K384 is modified to N6-acetyllysine; alternate. K384 carries the post-translational modification N6-succinyllysine; alternate. Residues K400, K413, and K442 each carry the N6-acetyllysine modification.

The protein belongs to the isocitrate and isopropylmalate dehydrogenases family. In terms of assembly, homodimer. Mg(2+) serves as cofactor. Mn(2+) is required as a cofactor. Post-translationally, acetylation at Lys-413 dramatically reduces catalytic activity. Deacetylated by SIRT3. Predominantly expressed in heart, liver and kidney. Expressed in activated B lymphocytes.

The protein localises to the mitochondrion. The catalysed reaction is D-threo-isocitrate + NADP(+) = 2-oxoglutarate + CO2 + NADPH. Its function is as follows. Plays a role in intermediary metabolism and energy production. It may tightly associate or interact with the pyruvate dehydrogenase complex. The chain is Isocitrate dehydrogenase [NADP], mitochondrial (Idh2) from Mus musculus (Mouse).